The following is a 272-amino-acid chain: Prohibitin 1 (272 aa).

Residue A2 is modified to N-acetylalanine. T91 is subject to Phosphothreonine. N6-acetyllysine occurs at positions 128 and 186. Residues 177–211 (KEFTEAVEAKQVAQQEAERARFVVEKAEQQKKAAI) are a coiled coil. N6-acetyllysine; alternate is present on K202. Position 202 is an N6-succinyllysine; alternate (K202). Y249 is subject to Phosphotyrosine.

This sequence belongs to the prohibitin family. As to quaternary structure, the mitochondrial prohibitin complex consists of two subunits (PHB1 and PHB2), assembled into a membrane-associated ring-shaped supercomplex of approximately 1 mDa. Interacts with STOML2. Interacts with MAP1LC3B (membrane-bound form LC3-II); the interaction requires PHB2 and takes place upon Parkin-mediated mitochondrial damage. Interacts with STAT3 (unphosphorylated or phosphorylated at 'Ser-727'). Interacts with CLPB. Interacts with CD86 (via cytoplasmic domain); the interactions increases after priming with CD40.

It localises to the mitochondrion inner membrane. It is found in the nucleus. The protein localises to the cytoplasm. Its subcellular location is the cell membrane. Protein with pleiotropic attributes mediated in a cell-compartment- and tissue-specific manner, which include the plasma membrane-associated cell signaling functions, mitochondrial chaperone, and transcriptional co-regulator of transcription factors in the nucleus. Plays a role in adipose tissue and glucose homeostasis in a sex-specific manner. Contributes to pulmonary vascular remodeling by accelerating proliferation of pulmonary arterial smooth muscle cells. Its function is as follows. In the mitochondria, together with PHB2, forms large ring complexes (prohibitin complexes) in the inner mitochondrial membrane (IMM) and functions as a chaperone protein that stabilizes mitochondrial respiratory enzymes and maintains mitochondrial integrity in the IMM, which is required for mitochondrial morphogenesis, neuronal survival, and normal lifespan. The prohibitin complex, with DNAJC19, regulates cardiolipin remodeling and the protein turnover of OMA1 in a cardiolipin-binding manner. Regulates mitochondrial respiration activity playing a role in cellular aging. The prohibitin complex plays a role of mitophagy receptor involved in targeting mitochondria for autophagic degradation. Involved in mitochondrial-mediated antiviral innate immunity, activates RIG-I-mediated signal transduction and production of IFNB1 and proinflammatory cytokine IL6. Functionally, in the nucleus, acts as a transcription coregulator, enhances promoter binding by TP53, a transcription factor it activates, but reduces the promoter binding by E2F1, a transcription factor it represses. Interacts with STAT3 to affect IL17 secretion in T-helper Th17 cells. In terms of biological role, in the plasma membrane, cooperates with CD86 to mediate CD86-signaling in B lymphocytes that regulates the level of IgG1 produced through the activation of distal signaling intermediates. Upon CD40 engagement, required to activate NF-kappa-B signaling pathway via phospholipase C and protein kinase C activation. In Bos taurus (Bovine), this protein is Prohibitin 1 (PHB1).